A 112-amino-acid chain; its full sequence is Protein Churchill (112 aa).

Residues Cys-2, Cys-5, Cys-30, Cys-33, His-59, Cys-61, Cys-64, His-66, His-71, Cys-88, and Cys-91 each coordinate Zn(2+).

It belongs to the Churchill family.

Functionally, transcriptional activator that mediates FGF signaling during neural development. Plays a role in the regulation of cell movement. Does not bind DNA by itself. This Mus musculus (Mouse) protein is Protein Churchill (Churc1).